Here is a 228-residue protein sequence, read N- to C-terminus: Geranylgeranylglyceryl phosphate synthase (228 aa).

Lysine 13 is a sn-glycerol 1-phosphate binding site. Residues aspartate 15 and threonine 41 each coordinate Mg(2+). Residues 159–164 (YVEYSG), glycine 189, and 209–210 (GN) contribute to the sn-glycerol 1-phosphate site.

Belongs to the GGGP/HepGP synthase family. Group I subfamily. Requires Mg(2+) as cofactor.

It is found in the cytoplasm. It carries out the reaction sn-glycerol 1-phosphate + (2E,6E,10E)-geranylgeranyl diphosphate = sn-3-O-(geranylgeranyl)glycerol 1-phosphate + diphosphate. Its pathway is membrane lipid metabolism; glycerophospholipid metabolism. In terms of biological role, prenyltransferase that catalyzes the transfer of the geranylgeranyl moiety of geranylgeranyl diphosphate (GGPP) to the C3 hydroxyl of sn-glycerol-1-phosphate (G1P). This reaction is the first ether-bond-formation step in the biosynthesis of archaeal membrane lipids. The polypeptide is Geranylgeranylglyceryl phosphate synthase (Methanosphaerula palustris (strain ATCC BAA-1556 / DSM 19958 / E1-9c)).